The sequence spans 202 residues: Cold-regulated 413 plasma membrane protein 4 (202 aa).

Topologically, residues 1-42 (MGRGEFLAMKTEENAANLINSDMNEFVAAAKKLVKDVGMLGG) are extracellular. The chain crosses the membrane as a helical span at residues 43–63 (VGFGTSVLQWAASIFAIYLLI). The Cytoplasmic portion of the chain corresponds to 64 to 72 (LDRTNWKTK). The chain crosses the membrane as a helical span at residues 73–93 (MLTTLLVPYIFFTLPSVIFQF). Residues 94-97 (FSGD) lie on the Extracellular side of the membrane. Residues 98-118 (FGKWIALIAIIVRLFFPKEFP) traverse the membrane as a helical segment. Residue E119 is a topological domain, cytoplasmic. A helical membrane pass occupies residues 120-140 (WLEIPVALILIVVVSPSLIAW). The Extracellular segment spans residues 141 to 145 (TLRES). Residues 146–166 (WVGAVICLVIACYLFHEHIKA) form a helical membrane-spanning segment. Residues 167–181 (SGGFKNSFTQKNGIS) are Cytoplasmic-facing. A helical transmembrane segment spans residues 182-202 (NTIGIVALLVYPVWTIFFHIF).

Belongs to the Cold-regulated 413 protein family.

The protein resides in the cell membrane. The chain is Cold-regulated 413 plasma membrane protein 4 from Arabidopsis thaliana (Mouse-ear cress).